The primary structure comprises 305 residues: GTPase Era (305 aa).

The Era-type G domain maps to 11-181 (RSGFISFVGR…LDVITRLLPE (171 aa)). The tract at residues 19–26 (GRPNTGKS) is G1. 19–26 (GRPNTGKS) lines the GTP pocket. The tract at residues 45 to 49 (ETTRH) is G2. A G3 region spans residues 66 to 69 (DTPG). GTP is bound by residues 66–70 (DTPGL) and 130–133 (TKVD). Residues 130–133 (TKVD) form a G4 region. A G5 region spans residues 160 to 162 (VSA). In terms of domain architecture, KH type-2 spans 212 to 291 (LKDELPHSVA…YLDLRIKVLK (80 aa)).

The protein belongs to the TRAFAC class TrmE-Era-EngA-EngB-Septin-like GTPase superfamily. Era GTPase family. Monomer.

The protein localises to the cytoplasm. Its subcellular location is the cell membrane. Functionally, an essential GTPase that binds both GDP and GTP, with rapid nucleotide exchange. Plays a role in 16S rRNA processing and 30S ribosomal subunit biogenesis and possibly also in cell cycle regulation and energy metabolism. The protein is GTPase Era of Corynebacterium diphtheriae (strain ATCC 700971 / NCTC 13129 / Biotype gravis).